The chain runs to 685 residues: Probable inactive leucine-rich repeat receptor-like protein kinase At1g66830 (685 aa).

Positions 1–21 (MSQLFLILCFILTHFFAIATS) are cleaved as a signal peptide. Residues 22–305 (LNDQGLALLS…RRANHHSRLC (284 aa)) lie on the Extracellular side of the membrane. 2 N-linked (GlcNAc...) asparagine glycosylation sites follow: N38 and N48. 8 LRR repeats span residues 65–89 (DMRV…IGSL), 90–113 (LSLR…LFGL), 115–136 (GLQS…EIGS), 137–161 (LKSL…LIPC), 162–185 (KKLK…LGSN), 186–210 (LVHL…VGSL), 212–234 (NLKG…SLGN), and 235–260 (LPEL…VLLN). An N-linked (GlcNAc...) asparagine glycan is attached at N151. N-linked (GlcNAc...) asparagine glycosylation is present at N193. The N-linked (GlcNAc...) asparagine glycan is linked to N247. A helical transmembrane segment spans residues 306–326 (IILTATGGTVAGIIFLASLFI). The Cytoplasmic portion of the chain corresponds to 327 to 685 (YYLRKASARA…ESFEKLVTSI (359 aa)). The 286-residue stretch at 397 to 682 (KASAFLLGKS…SVLESFEKLV (286 aa)) folds into the Protein kinase domain. A phosphoserine mark is found at S399, S480, and S590.

It belongs to the protein kinase superfamily. Ser/Thr protein kinase family.

Its subcellular location is the cell membrane. The polypeptide is Probable inactive leucine-rich repeat receptor-like protein kinase At1g66830 (Arabidopsis thaliana (Mouse-ear cress)).